Consider the following 357-residue polypeptide: MVIYHRKVVFTYVRAKRFYHFLNIEMVTDFKSLLPVIDISPLLAKCDDFDMAEDAGVVEVVGKLDRACRDVGFFYVIGHGISDDLINKVKEMTHQFFELPYEEKLKIKITPTAGYRGYQRIGVNFTSGKQDMHEAIDCYREFKQGKHGDIGKVLEGPNQWPGNPQEYKDLMEKYIKLCTDLSRNILRGISLALGGSPYEFEGKMLRDPFWVMRIIGYPGVNQENVIGCGAHTDYGLLTLINQDDDKTALQVKNVDGDWIPAIPIPGSFICNIGDMLTILSNGVYQSTLHKVINNSPKYRVCVAFFYETNFEAEVEPLDIFKEKHPRKETSQVAKRVVYGQHLINKVLTTFANLVENS.

Residues 208 to 308 enclose the Fe2OG dioxygenase domain; that stretch reads PFWVMRIIGY…RVCVAFFYET (101 aa). Positions 231, 233, and 289 each coordinate Fe cation. A 2-oxoglutarate-binding site is contributed by Arg299.

It belongs to the iron/ascorbate-dependent oxidoreductase family. It depends on Fe(2+) as a cofactor. As to expression, expressed in senescent leaves.

The protein localises to the cytoplasm. Its subcellular location is the cytosol. The catalysed reaction is L-homoarginine + 2-oxoglutarate + O2 = 6-hydroxy-L-homoarginine + succinate + CO2. It catalyses the reaction L-arginine + 2-oxoglutarate + O2 = 5-hydroxy-L-arginine + succinate + CO2. Its activity is regulated as follows. Slightly inhibited by canavanine (Can), the 5-oxa-analog of arginine. 2-oxoglutarate-dependent dioxygenase catalyzing homoarginine 6-hydroxylation and arginine-5-hydroxylation thus producing 6-hydroxy-L-homoarginine and 5-hydroxy-L-arginine, respectively. Guanidine (Gd) is in turn synthesized by the spontaneous conversion of 6-hydroxy-L-homoarginine and 5-hydroxy-L-arginine to (S)-2-amino-6-oxohexanoate (RHEA:79843) and L-glutamate 5-semialdehyde (RHEA:31527); guanidine is a nitrogen-rich compound that may serve as a defense or signaling substance. The chain is Homoarginine-6-hydroxylase 2-ODD-C23.2 from Arabidopsis thaliana (Mouse-ear cress).